Reading from the N-terminus, the 140-residue chain is Cysteine desulfuration protein SufE (140 aa).

The active-site Cysteine persulfide intermediate is the Cys51.

The protein belongs to the SufE family. Homodimer. Interacts with SufS.

It is found in the cytoplasm. It functions in the pathway cofactor biosynthesis; iron-sulfur cluster biosynthesis. Its function is as follows. Participates in cysteine desulfuration mediated by SufS. Cysteine desulfuration mobilizes sulfur from L-cysteine to yield L-alanine and constitutes an essential step in sulfur metabolism for biosynthesis of a variety of sulfur-containing biomolecules. Functions as a sulfur acceptor for SufS, by mediating the direct transfer of the sulfur atom from the S-sulfanylcysteine of SufS, an intermediate product of cysteine desulfuration process. In Yersinia pestis bv. Antiqua (strain Antiqua), this protein is Cysteine desulfuration protein SufE.